The chain runs to 245 residues: tRNA1(Val) (adenine(37)-N6)-methyltransferase (245 aa).

It belongs to the methyltransferase superfamily. tRNA (adenine-N(6)-)-methyltransferase family.

It is found in the cytoplasm. The enzyme catalyses adenosine(37) in tRNA1(Val) + S-adenosyl-L-methionine = N(6)-methyladenosine(37) in tRNA1(Val) + S-adenosyl-L-homocysteine + H(+). Functionally, specifically methylates the adenine in position 37 of tRNA(1)(Val) (anticodon cmo5UAC). The polypeptide is tRNA1(Val) (adenine(37)-N6)-methyltransferase (Escherichia coli (strain UTI89 / UPEC)).